Here is a 132-residue protein sequence, read N- to C-terminus: MKLFIIIVVTSLTISKVFDKTLVTIEARNLRKMDRHEHFNANEDFVEAKMLKKIDNKNNLNNRCINDFAPTNPGHNSGIGHPKVINNKFTKDFAPTNPGHSPGIGHLRVVNNKFTNDFAPTNPGNSPGIRHP.

Positions M1 to D19 are cleaved as a signal peptide. Residues K20–N66 constitute a propeptide that is removed on maturation. Hydroxyproline occurs at positions 70 and 73. The propeptide occupies P82–K91. 3 positions are modified to hydroxyproline: P95, P98, and P102. Positions L107 to N116 are excised as a propeptide. P120, P123, and P127 each carry hydroxyproline. P132 is a propeptide.

This sequence belongs to the C-terminally encoded plant signaling peptide (CEP) family. In terms of assembly, interacts with CEP receptors (e.g. CEPR1 and CEPR2). Post-translationally, the mature small signaling peptide is generated by proteolytic processing of the longer precursor.

It localises to the secreted. The protein resides in the extracellular space. Its subcellular location is the apoplast. Its function is as follows. Extracellular signaling peptide that may regulate primary root growth rate and systemic nitrogen (N)-demand signaling. The chain is Precursor of CEP10 from Arabidopsis thaliana (Mouse-ear cress).